The sequence spans 65 residues: Large ribosomal subunit protein bL35 (65 aa).

Residues 30–65 form a disordered region; it reads AFRSHLAQNKSTKQKRQSKHGTFMHPTDYKRLKDLM. The span at 56 to 65 shows a compositional bias: basic and acidic residues; that stretch reads TDYKRLKDLM.

Belongs to the bacterial ribosomal protein bL35 family.

In Mycoplasma mobile (strain ATCC 43663 / 163K / NCTC 11711) (Mesomycoplasma mobile), this protein is Large ribosomal subunit protein bL35.